Here is a 68-residue protein sequence, read N- to C-terminus: Conotoxin Cal14.13a (68 aa).

The first 21 residues, 1-21, serve as a signal peptide directing secretion; that stretch reads MKLCVVIVLLMLAMPFNGGEA. A propeptide spanning residues 22–38 is cleaved from the precursor; sequence SRFFNQHARSQRSGMKT. A Valine amide modification is found at V66.

In terms of processing, contains 2 disulfide bonds. In terms of tissue distribution, expressed by the venom duct.

The protein localises to the secreted. In terms of biological role, probable neurotoxin with unknown target. Possibly targets ion channels. In Californiconus californicus (California cone), this protein is Conotoxin Cal14.13a.